The sequence spans 91 residues: Non-specific lipid-transfer protein 1 (91 aa).

4 disulfides stabilise this stretch: Cys3/Cys50, Cys13/Cys27, Cys28/Cys73, and Cys48/Cys87.

The protein belongs to the plant LTP family.

Plant non-specific lipid-transfer proteins transfer phospholipids as well as galactolipids across membranes. May play a role in wax or cutin deposition in the cell walls of expanding epidermal cells and certain secretory tissues. The chain is Non-specific lipid-transfer protein 1 from Prunus armeniaca (Apricot).